The sequence spans 115 residues: Insulin (115 aa).

Positions 1–26 are cleaved as a signal peptide; that stretch reads MALSPFLAAVIPLVLLLSRAPPSADT. Cystine bridges form between Cys-33/Cys-101, Cys-45/Cys-114, and Cys-100/Cys-105. Positions 60-92 are cleaved as a propeptide — c peptide; it reads DTGALAAFLPLAYAEDNESQDDESIGINEVLKS.

The protein belongs to the insulin family. Heterodimer of a B chain and an A chain linked by two disulfide bonds.

The protein resides in the secreted. Its function is as follows. Insulin decreases blood glucose concentration. It increases cell permeability to monosaccharides, amino acids and fatty acids. It accelerates glycolysis, the pentose phosphate cycle, and glycogen synthesis in liver. In Myxine glutinosa (Atlantic hagfish), this protein is Insulin (ins).